The following is a 371-amino-acid chain: N-acetyldiaminopimelate deacetylase (371 aa).

Asp-68 is a catalytic residue. The active-site Proton acceptor is Glu-127.

It belongs to the peptidase M20A family. N-acetyldiaminopimelate deacetylase subfamily.

It catalyses the reaction N-acetyl-(2S,6S)-2,6-diaminopimelate + H2O = (2S,6S)-2,6-diaminopimelate + acetate. It functions in the pathway amino-acid biosynthesis; L-lysine biosynthesis via DAP pathway; LL-2,6-diaminopimelate from (S)-tetrahydrodipicolinate (acetylase route): step 3/3. Its function is as follows. Catalyzes the conversion of N-acetyl-diaminopimelate to diaminopimelate and acetate. This is N-acetyldiaminopimelate deacetylase from Listeria monocytogenes serotype 4b (strain CLIP80459).